The following is a 178-amino-acid chain: Cytidylate kinase (178 aa).

7–15 serves as a coordination point for ATP; it reads GLPGTGTTT.

The protein belongs to the cytidylate kinase family. Type 2 subfamily.

The protein localises to the cytoplasm. The catalysed reaction is CMP + ATP = CDP + ADP. It carries out the reaction dCMP + ATP = dCDP + ADP. The chain is Cytidylate kinase from Methanococcus maripaludis (strain C7 / ATCC BAA-1331).